The primary structure comprises 331 residues: Ferrochelatase (331 aa).

Fe cation is bound by residues His187 and Glu286.

This sequence belongs to the ferrochelatase family.

It localises to the cytoplasm. It catalyses the reaction heme b + 2 H(+) = protoporphyrin IX + Fe(2+). Its pathway is porphyrin-containing compound metabolism; protoheme biosynthesis; protoheme from protoporphyrin-IX: step 1/1. In terms of biological role, catalyzes the ferrous insertion into protoporphyrin IX. The chain is Ferrochelatase from Legionella pneumophila (strain Lens).